The chain runs to 391 residues: E3 ubiquitin-protein ligase RMND5A (391 aa).

Residue Met1 is modified to N-acetylmethionine. Residues 114–146 form the LisH domain; it reads SQRLLNEVMVEHFFRQGMLDVAEELCQESGLSV. The region spanning 153–210 is the CTLH domain; that stretch reads PFVELNRILEALKVRVLRPALEWAVSNREMLIAQNSSLEFKLHRLYFISLLMGGTTNQ. Residues 336–377 form an RING-Gid-type zinc finger; sequence CPILRQQTTDNNPPMKLVCGHIISRDALNKMFNGSKLKCPYC.

Identified in the CTLH complex that contains GID4, RANBP9 and/or RANBP10, MKLN1, MAEA, RMND5A (or alternatively its paralog RMND5B), GID8, ARMC8, WDR26 and YPEL5. Within this complex, MAEA, RMND5A (or alternatively its paralog RMND5B), GID8, WDR26, and RANBP9 and/or RANBP10 form the catalytic core, while GID4, MKLN1, ARMC8 and YPEL5 have ancillary roles.

Its subcellular location is the nucleus. It is found in the nucleoplasm. The protein localises to the cytoplasm. The enzyme catalyses S-ubiquitinyl-[E2 ubiquitin-conjugating enzyme]-L-cysteine + [acceptor protein]-L-lysine = [E2 ubiquitin-conjugating enzyme]-L-cysteine + N(6)-ubiquitinyl-[acceptor protein]-L-lysine.. Functionally, core component of the CTLH E3 ubiquitin-protein ligase complex that selectively accepts ubiquitin from UBE2H and mediates ubiquitination and subsequent proteasomal degradation of the transcription factor HBP1. MAEA and RMND5A are both required for catalytic activity of the CTLH E3 ubiquitin-protein ligase complex. Catalytic activity of the complex is required for normal cell proliferation. The CTLH E3 ubiquitin-protein ligase complex is not required for the degradation of enzymes involved in gluconeogenesis, such as FBP1. This chain is E3 ubiquitin-protein ligase RMND5A (Rmnd5a), found in Mus musculus (Mouse).